We begin with the raw amino-acid sequence, 289 residues long: Delta-sarcoglycan (289 aa).

The Cytoplasmic segment spans residues 1-37 (MPQEQYSHHRSTMPSSEGPHIYKVGIYGWRKRCLYFF). A helical; Signal-anchor for type II membrane protein membrane pass occupies residues 38–56 (VLLLMILILVNLAMTIWIL). At 57 to 289 (KVMNFTIDGM…TCQINTSVCL (233 aa)) the chain is on the extracellular side. 2 N-linked (GlcNAc...) asparagine glycosylation sites follow: asparagine 60 and asparagine 108. Cystine bridges form between cysteine 263/cysteine 288 and cysteine 265/cysteine 281. N-linked (GlcNAc...) asparagine glycosylation occurs at asparagine 284.

It belongs to the sarcoglycan beta/delta/gamma/zeta family. Interacts with FLNC. Cross-link to form 2 major subcomplexes: one consisting of SGCB, SGCD and SGCG and the other consisting of SGCB and SGCD. The association between SGCB and SGCG is particularly strong while SGCA is loosely associated with the other sarcoglycans. Interacts with DAG1. Disulfide bonds are present. Most strongly expressed in skeletal and heart muscle. Also detected in proliferating myoblasts.

It is found in the cell membrane. The protein resides in the sarcolemma. The protein localises to the cytoplasm. Its subcellular location is the cytoskeleton. Its function is as follows. Component of the sarcoglycan complex, a subcomplex of the dystrophin-glycoprotein complex which forms a link between the F-actin cytoskeleton and the extracellular matrix. The sequence is that of Delta-sarcoglycan (Sgcd) from Mus musculus (Mouse).